Here is an 84-residue protein sequence, read N- to C-terminus: Small ribosomal subunit protein uS15 (84 aa).

The protein belongs to the universal ribosomal protein uS15 family. Part of the 30S ribosomal subunit. Forms a bridge to the 50S subunit in the 70S ribosome, contacting the 23S rRNA.

Functionally, one of the primary rRNA binding proteins, it binds directly to 16S rRNA where it helps nucleate assembly of the platform of the 30S subunit by binding and bridging several RNA helices of the 16S rRNA. In terms of biological role, forms an intersubunit bridge (bridge B4) with the 23S rRNA of the 50S subunit in the ribosome. This is Small ribosomal subunit protein uS15 from Thermosipho africanus (strain TCF52B).